A 253-amino-acid polypeptide reads, in one-letter code: Acetylglutamate kinase (253 aa).

Substrate is bound by residues 40-41 (GG), R62, and N154.

It belongs to the acetylglutamate kinase family. ArgB subfamily.

The protein resides in the cytoplasm. It carries out the reaction N-acetyl-L-glutamate + ATP = N-acetyl-L-glutamyl 5-phosphate + ADP. It participates in amino-acid biosynthesis; L-arginine biosynthesis; N(2)-acetyl-L-ornithine from L-glutamate: step 2/4. Catalyzes the ATP-dependent phosphorylation of N-acetyl-L-glutamate. This chain is Acetylglutamate kinase, found in Staphylococcus saprophyticus subsp. saprophyticus (strain ATCC 15305 / DSM 20229 / NCIMB 8711 / NCTC 7292 / S-41).